The following is a 688-amino-acid chain: Protein adenylyltransferase SelO, mitochondrial (688 aa).

A mitochondrion-targeting transit peptide spans 1 to 23 (MGEKRTIIKALKNSAASHFIKKL). Positions 132, 134, 135, 156, 168, 169, 220, and 227 each coordinate ATP. D338 acts as the Proton acceptor in catalysis. Residues N339 and D348 each contribute to the Mg(2+) site. Residue D348 participates in ATP binding.

It belongs to the SELO family. It depends on Mg(2+) as a cofactor. Forms probably one or more intrachain disulfide bridges.

Its subcellular location is the mitochondrion. The catalysed reaction is L-tyrosyl-[protein] + ATP = O-(5'-adenylyl)-L-tyrosyl-[protein] + diphosphate. Its function is as follows. Catalyzes the transfer of adenosine 5'-monophosphate (AMP) to Tyr residues of target mitochondrial proteins (AMPylation). Involved in redox homeostasis by regulating the cellular response to oxidative stress. Regulates protein S-glutathionylation levels possibly by AMPylation of deglutathionylation enzymes such as glutaredoxins. The chain is Protein adenylyltransferase SelO, mitochondrial from Saccharomyces cerevisiae (strain ATCC 204508 / S288c) (Baker's yeast).